A 175-amino-acid polypeptide reads, in one-letter code: MPVNPVVLGTISSAYGISGWLNIISFTQNAASIFEYQPWFIKKLNTWLDVILDEWKYNYHNKLIIKINSIENREAAQLFANCNIIVDASQLPTLSDGDYYWKDLIGCQVETINSYQLGKVIDLIETGSNDVMVVQANQQHSTKINELLIPFIYGQVIKNVDLATHIIKVDWDPEF.

The PRC barrel domain occupies 96–175; the sequence is DGDYYWKDLI…IIKVDWDPEF (80 aa).

Belongs to the RimM family. Binds ribosomal protein uS19.

The protein localises to the cytoplasm. Its function is as follows. An accessory protein needed during the final step in the assembly of 30S ribosomal subunit, possibly for assembly of the head region. Essential for efficient processing of 16S rRNA. May be needed both before and after RbfA during the maturation of 16S rRNA. It has affinity for free ribosomal 30S subunits but not for 70S ribosomes. This chain is Ribosome maturation factor RimM, found in Baumannia cicadellinicola subsp. Homalodisca coagulata.